We begin with the raw amino-acid sequence, 229 residues long: MAKKSKQLRAALEKIDSTKAYSVEEAVALAKETNFAKFDATVEVAYNLNIDVKKADQQIRGAMVLPNGTGKTSRVLVFARGAKAEEAKAAGADFVGEDDLVAKINDGWLDFDVVIATPDMMALVGRLGRVLGPRNLMPNPKTGTVTMDVAKAVEESKGGKITYRADRAGNVQAIIGKVSFEADKLVENFKAFNDTIQKAKPATAKGTYVTNLTITTTQGVGIKVDVNSL.

Belongs to the universal ribosomal protein uL1 family. Part of the 50S ribosomal subunit.

Binds directly to 23S rRNA. The L1 stalk is quite mobile in the ribosome, and is involved in E site tRNA release. In terms of biological role, protein L1 is also a translational repressor protein, it controls the translation of the L11 operon by binding to its mRNA. The chain is Large ribosomal subunit protein uL1 from Streptococcus sanguinis (strain SK36).